We begin with the raw amino-acid sequence, 424 residues long: MAVFKKKKTSLTSLFLGCYKAKNASKYEGGEKAVMKIRTCPAFKRLSLSDISDPSSPMSVMDDLSHSFTSQKLRLFTLSELRVITHNFSRSNMLGEGGFGPVYKGFIDDKVKPGIEAQPVAVKALDLHGHQGHREWLAEILFLGQLSNKHLVKLIGFCCEEEQRVLVYEYMPRGSLENQLFRRNSLAMAWGIRMKIALGAAKGLAFLHEAEKPVIYRDFKTSNILLDSDYNAKLSDFGLAKDGPEGEHTHVTTRVMGTQGYAAPEYIMTGHLTTMNDVYSFGVVLLELITGKRSMDNTRTRREQSLVEWARPMLRDQRKLERIIDPRLANQHKTEAAQVAASLAYKCLSQHPKYRPTMCEVVKVLESIQEVDIRKHDGNNNKEGKKFVDINKFRHHRKGKRRVNIAYSDSLVYKESKAKQNDGI.

In terms of domain architecture, Protein kinase spans 88–368 (FSRSNMLGEG…CEVVKVLESI (281 aa)). ATP contacts are provided by residues 94-102 (LGEGGFGPV) and Lys123. The Proton acceptor role is filled by Asp218.

It belongs to the protein kinase superfamily. Ser/Thr protein kinase family. In terms of tissue distribution, expressed specifically in roots.

Its subcellular location is the cell membrane. The catalysed reaction is L-seryl-[protein] + ATP = O-phospho-L-seryl-[protein] + ADP + H(+). It carries out the reaction L-threonyl-[protein] + ATP = O-phospho-L-threonyl-[protein] + ADP + H(+). Its function is as follows. May play a role in the signal transduction pathway of osmotic stress. May be involved in plant defense signaling. This chain is Probable serine/threonine-protein kinase PBL12, found in Arabidopsis thaliana (Mouse-ear cress).